The sequence spans 350 residues: Phosphate acyltransferase (350 aa).

This sequence belongs to the PlsX family. In terms of assembly, homodimer. Probably interacts with PlsY.

The protein localises to the cytoplasm. It carries out the reaction a fatty acyl-[ACP] + phosphate = an acyl phosphate + holo-[ACP]. It functions in the pathway lipid metabolism; phospholipid metabolism. In terms of biological role, catalyzes the reversible formation of acyl-phosphate (acyl-PO(4)) from acyl-[acyl-carrier-protein] (acyl-ACP). This enzyme utilizes acyl-ACP as fatty acyl donor, but not acyl-CoA. This is Phosphate acyltransferase from Phenylobacterium zucineum (strain HLK1).